We begin with the raw amino-acid sequence, 424 residues long: Glutamyl-tRNA reductase (424 aa).

Residues 49–52 (TCNR), S109, 114–116 (EDQ), and Q120 each bind substrate. C50 acts as the Nucleophile in catalysis. 189–194 (GFGKMS) is an NADP(+) binding site.

This sequence belongs to the glutamyl-tRNA reductase family. Homodimer.

It catalyses the reaction (S)-4-amino-5-oxopentanoate + tRNA(Glu) + NADP(+) = L-glutamyl-tRNA(Glu) + NADPH + H(+). The protein operates within porphyrin-containing compound metabolism; protoporphyrin-IX biosynthesis; 5-aminolevulinate from L-glutamyl-tRNA(Glu): step 1/2. In terms of biological role, catalyzes the NADPH-dependent reduction of glutamyl-tRNA(Glu) to glutamate 1-semialdehyde (GSA). In Alkaliphilus metalliredigens (strain QYMF), this protein is Glutamyl-tRNA reductase.